The chain runs to 113 residues: Cell division topological specificity factor (113 aa).

The protein belongs to the MinE family.

Prevents the cell division inhibition by proteins MinC and MinD at internal division sites while permitting inhibition at polar sites. This ensures cell division at the proper site by restricting the formation of a division septum at the midpoint of the long axis of the cell. The polypeptide is Cell division topological specificity factor (Methylobacterium radiotolerans (strain ATCC 27329 / DSM 1819 / JCM 2831 / NBRC 15690 / NCIMB 10815 / 0-1)).